The primary structure comprises 3085 residues: Genome polyprotein (3085 aa).

Residues 170–313 (LVAKSDFDDL…AGDVGRTMHY (144 aa)) form the Peptidase S30 domain. Residues His-224, Glu-233, and Ser-266 each act as for P1 proteinase activity in the active site. The short motif at 365–368 (KMAC) is the Involved in interaction with stylet and aphid transmission element. The short motif at 622-624 (PTK) is the Involved in virions binding and aphid transmission element. The 123-residue stretch at 648 to 770 (MYIAKEGYCY…EGEMKWYRVG (123 aa)) folds into the Peptidase C6 domain. Active-site for helper component proteinase activity residues include Cys-656 and His-729. The Helicase ATP-binding domain occupies 1241–1393 (TICASSEQEF…TQHDVLIKIE (153 aa)). Position 1254 to 1261 (1254 to 1261 (GAVGSGKS)) interacts with ATP. The DESH box signature appears at 1343–1346 (DESH). The region spanning 1412-1571 (DVVQNGDNIL…NLPVMTHNVT (160 aa)) is the Helicase C-terminal domain. The Nuclear localization signal motif lies at 1895–1904 (ERGKRKGNNS). Tyr-1919 is subject to O-(5'-phospho-RNA)-tyrosine. A Peptidase C4 domain is found at 2047–2266 (GKSIVKGLRN…VAWNGMTLRE (220 aa)). Catalysis depends on for nuclear inclusion protein A activity residues His-2092, Asp-2127, and Cys-2198. The region spanning 2535–2659 (WIYCDADGSQ…AIYPSKEKFL (125 aa)) is the RdRp catalytic domain. The disordered stretch occupies residues 2801 to 2869 (DGPDIVTYQG…STAVPRLKQI (69 aa)). Positions 2816–2831 (KSSQPQSSSPQVPQQV) are enriched in low complexity. The segment covering 2839-2855 (GRDKQSVIKHDSTKSKD) has biased composition (basic and acidic residues). Phosphothreonine is present on Thr-3068.

This sequence belongs to the potyviridae genome polyprotein family. As to quaternary structure, interacts with host eIF4E protein (via cap-binding region); this interaction mediates the translation of the VPg-viral RNA conjugates. Part of a complex that comprises VPg, RNA, host EIF4E and EIF4G; this interaction mediates the translation of the VPg-viral RNA conjugates. In terms of processing, VPg is uridylylated by the polymerase and is covalently attached to the 5'-end of the genomic RNA. This uridylylated form acts as a nucleotide-peptide primer for the polymerase. Potyviral RNA is expressed as two polyproteins which undergo post-translational proteolytic processing. Genome polyprotein is processed by NIa-pro, P1 and HC-pro proteinases resulting in the production of at least ten individual proteins. P3N-PIPO polyprotein is cleaved by P1 and HC-pro proteinases resulting in the production of three individual proteins. The P1 proteinase and the HC-pro cleave only their respective C-termini autocatalytically. 6K1 is essential for proper proteolytic separation of P3 from CI.

The protein localises to the host cytoplasmic vesicle. The protein resides in the host nucleus. Its subcellular location is the virion. The enzyme catalyses RNA(n) + a ribonucleoside 5'-triphosphate = RNA(n+1) + diphosphate. It carries out the reaction Hydrolyzes glutaminyl bonds, and activity is further restricted by preferences for the amino acids in P6 - P1' that vary with the species of potyvirus, e.g. Glu-Xaa-Xaa-Tyr-Xaa-Gln-|-(Ser or Gly) for the enzyme from tobacco etch virus. The natural substrate is the viral polyprotein, but other proteins and oligopeptides containing the appropriate consensus sequence are also cleaved.. The catalysed reaction is Hydrolyzes a Gly-|-Gly bond at its own C-terminus, commonly in the sequence -Tyr-Xaa-Val-Gly-|-Gly, in the processing of the potyviral polyprotein.. Its function is as follows. Required for aphid transmission and also has proteolytic activity. Only cleaves a Gly-Gly dipeptide at its own C-terminus. Interacts with virions and aphid stylets. Acts as a suppressor of RNA-mediated gene silencing, also known as post-transcriptional gene silencing (PTGS), a mechanism of plant viral defense that limits the accumulation of viral RNAs. May have RNA-binding activity. In terms of biological role, has helicase activity. It may be involved in replication. Functionally, indispensable for virus replication. Reduces the abundance of host transcripts related to jasmonic acid biosynthesis therefore altering the host defenses. In order to increase its own stability, decreases host protein degradation pathways. Indispensable for virus replication. Its function is as follows. Mediates the cap-independent, EIF4E-dependent translation of viral genomic RNAs. Binds to the cap-binding site of host EIF4E and thus interferes with the host EIF4E-dependent mRNA export and translation. VPg-RNA directly binds EIF4E and is a template for transcription. Also forms trimeric complexes with EIF4E-EIF4G, which are templates for translation. In terms of biological role, has RNA-binding and proteolytic activities. Functionally, an RNA-dependent RNA polymerase that plays an essential role in the virus replication. Involved in aphid transmission, cell-to-cell and systemis movement, encapsidation of the viral RNA and in the regulation of viral RNA amplification. In Beet mosaic virus (BtMV), this protein is Genome polyprotein.